The following is a 1023-amino-acid chain: Cell division cycle-associated protein 2 (1023 aa).

A compositionally biased stretch (basic and acidic residues) spans M1–E14. Residues M1–G21 form a disordered region. Phosphoserine is present on residues S98, S120, S126, S131, S210, S291, and S309. A Phosphothreonine modification is found at T312. In terms of domain architecture, PP1-binding spans K389–D449. A phosphoserine mark is found at S400 and S407. T412 carries the post-translational modification Phosphothreonine. Position 437 is a phosphoserine (S437). The disordered stretch occupies residues S542–E580. Basic residues predominate over residues S561–V573. A phosphoserine mark is found at S591 and S614. Residues S667–P729 are disordered. Over residues N679–I691 the composition is skewed to low complexity. Over residues N696–A706 the composition is skewed to basic and acidic residues. Residues S710 and S756 each carry the phosphoserine modification. K762 participates in a covalent cross-link: Glycyl lysine isopeptide (Lys-Gly) (interchain with G-Cter in SUMO2). Residues E803–M816 are compositionally biased toward basic and acidic residues. Disordered stretches follow at residues E803 to V860 and S936 to Q1023. 2 positions are modified to phosphoserine: S936 and S977. Polar residues-rich tracts occupy residues C979–F992 and S1000–T1010. S1000 carries the post-translational modification Phosphoserine. Basic and acidic residues predominate over residues E1013–Q1023.

In terms of assembly, interacts with PPP1CC. Post-translationally, phosphorylated by CDK1. May regulate its subcellular location. Ubiquitously expressed.

Its subcellular location is the nucleus. Regulator of chromosome structure during mitosis required for condensin-depleted chromosomes to retain their compact architecture through anaphase. Acts by mediating the recruitment of phopsphatase PP1-gamma subunit (PPP1CC) to chromatin at anaphase and into the following interphase. At anaphase onset, its association with chromatin targets a pool of PPP1CC to dephosphorylate substrates. The polypeptide is Cell division cycle-associated protein 2 (CDCA2) (Homo sapiens (Human)).